A 42-amino-acid chain; its full sequence is Photosystem I reaction center subunit IX (42 aa).

Residues 7–27 (YLSTAPVLATLWFGFLAGLLI) traverse the membrane as a helical segment.

The protein belongs to the PsaJ family.

The protein localises to the plastid. It localises to the chloroplast thylakoid membrane. In terms of biological role, may help in the organization of the PsaE and PsaF subunits. This is Photosystem I reaction center subunit IX from Marchantia polymorpha (Common liverwort).